The sequence spans 123 residues: uncharacterized protein (123 aa).

The first 19 residues, 1–19, serve as a signal peptide directing secretion; sequence MKIKYFFIPLFSSAILFSA. The N-palmitoyl cysteine moiety is linked to residue C20. Residue C20 is the site of S-diacylglycerol cysteine attachment.

This sequence belongs to the MG439/MG440 family.

The protein localises to the cell membrane. This is an uncharacterized protein from Mycoplasma pneumoniae (strain ATCC 29342 / M129 / Subtype 1) (Mycoplasmoides pneumoniae).